We begin with the raw amino-acid sequence, 221 residues long: Josephin-like protein (221 aa).

The tract at residues 1 to 37 (MESPSARTLGNSLGDDSGNGNENGNGSGNGNTTMMPH) is disordered. Low complexity predominate over residues 9-20 (LGNSLGDDSGNG). The Josephin domain occupies 36–214 (PHGIYHERQT…DCKDKSQQRW (179 aa)). Catalysis depends on Cys-49, which acts as the Nucleophile. Residue His-152 is the Proton acceptor of the active site.

It carries out the reaction Thiol-dependent hydrolysis of ester, thioester, amide, peptide and isopeptide bonds formed by the C-terminal Gly of ubiquitin (a 76-residue protein attached to proteins as an intracellular targeting signal).. May act as a deubiquitinating enzyme. The sequence is that of Josephin-like protein from Drosophila melanogaster (Fruit fly).